A 338-amino-acid polypeptide reads, in one-letter code: Large ribosomal subunit protein uL10 (338 aa).

Residues 298–338 (TVQQSQSQQPAAEEKKEEKKEEEKKGPSEEEIASGLASLFG) are disordered. Basic and acidic residues predominate over residues 309-325 (AEEKKEEKKEEEKKGPS).

Belongs to the universal ribosomal protein uL10 family. Part of the 50S ribosomal subunit. Forms part of the ribosomal stalk which helps the ribosome interact with GTP-bound translation factors. Forms a heptameric L10(L12)2(L12)2(L12)2 complex, where L10 forms an elongated spine to which the L12 dimers bind in a sequential fashion.

Functionally, forms part of the ribosomal stalk, playing a central role in the interaction of the ribosome with GTP-bound translation factors. The protein is Large ribosomal subunit protein uL10 of Saccharolobus solfataricus (strain ATCC 35092 / DSM 1617 / JCM 11322 / P2) (Sulfolobus solfataricus).